Here is a 207-residue protein sequence, read N- to C-terminus: Zinc finger protein 487 (207 aa).

One can recognise a KRAB domain in the interval 1–43 (MLENYSLLLSVGYCITKPEVVCKLEHGQVLWILEEESPSQSHL). The segment at 177-202 (KQCFEYNQCGKAFHEEAACSTHKRVC) adopts a C2H2-type; atypical zinc-finger fold.

This sequence belongs to the krueppel C2H2-type zinc-finger protein family.

It localises to the nucleus. Functionally, may be involved in transcriptional regulation. The protein is Zinc finger protein 487 (ZNF487) of Homo sapiens (Human).